The sequence spans 155 residues: D-aminoacyl-tRNA deacylase (155 aa).

The short motif at 147 to 148 (GP) is the Gly-cisPro motif, important for rejection of L-amino acids element.

This sequence belongs to the DTD family. As to quaternary structure, homodimer.

It localises to the cytoplasm. It catalyses the reaction glycyl-tRNA(Ala) + H2O = tRNA(Ala) + glycine + H(+). The enzyme catalyses a D-aminoacyl-tRNA + H2O = a tRNA + a D-alpha-amino acid + H(+). An aminoacyl-tRNA editing enzyme that deacylates mischarged D-aminoacyl-tRNAs. Also deacylates mischarged glycyl-tRNA(Ala), protecting cells against glycine mischarging by AlaRS. Acts via tRNA-based rather than protein-based catalysis; rejects L-amino acids rather than detecting D-amino acids in the active site. By recycling D-aminoacyl-tRNA to D-amino acids and free tRNA molecules, this enzyme counteracts the toxicity associated with the formation of D-aminoacyl-tRNA entities in vivo and helps enforce protein L-homochirality. This is D-aminoacyl-tRNA deacylase from Corynebacterium urealyticum (strain ATCC 43042 / DSM 7109).